The following is a 376-amino-acid chain: DNA replication and repair protein RecF (376 aa).

30 to 37 (GNNAQGKS) lines the ATP pocket.

It belongs to the RecF family.

The protein resides in the cytoplasm. Functionally, the RecF protein is involved in DNA metabolism; it is required for DNA replication and normal SOS inducibility. RecF binds preferentially to single-stranded, linear DNA. It also seems to bind ATP. In Nostoc sp. (strain PCC 7120 / SAG 25.82 / UTEX 2576), this protein is DNA replication and repair protein RecF.